The following is a 424-amino-acid chain: Putative histone deacetylase complex subunit cti6 (424 aa).

Disordered regions lie at residues 1-49, 117-155, 170-341, and 381-405; these read MPSN…GEVT, SKYLGNGKPIEASQTEESSSTPPSPATKKSSKQRLTMNS, KEKS…PDGT, and AQSAGNQSSTKSSKEGPEEEKETLR. The PHD-type zinc-finger motif lies at 48-103; sequence VTRCVCGIVESDDEASDGGLYIQCDQCSVWQHGNCVGFADESEVPEVYYCEICHPE. Residues 127 to 137 are compositionally biased toward low complexity; the sequence is EASQTEESSST. Residue Ser187 is modified to Phosphoserine. Acidic residues predominate over residues 241–256; the sequence is DAPEEETVDTVEEIAD. The span at 257–266 shows a compositional bias: basic and acidic residues; sequence EEKHSVKEES. Low complexity predominate over residues 272 to 287; the sequence is QSSQQSTITSISTTTR. A compositionally biased stretch (basic and acidic residues) spans 294 to 303; the sequence is REAAAEDKAD. Over residues 313-324 the composition is skewed to basic residues; sequence SKTRKVGGRRGK. The span at 392–405 shows a compositional bias: basic and acidic residues; sequence SSKEGPEEEKETLR.

The protein resides in the cytoplasm. It is found in the nucleus. Could be a component of the RPD3C(L) histone deacetylase complex (HDAC). The polypeptide is Putative histone deacetylase complex subunit cti6 (cti6) (Schizosaccharomyces pombe (strain 972 / ATCC 24843) (Fission yeast)).